We begin with the raw amino-acid sequence, 147 residues long: Lipoprotein signal peptidase (147 aa).

A run of 4 helical transmembrane segments spans residues 10-30, 34-54, 59-79, and 87-107; these read ISIF…IKFL, GIVK…GTAF, FLGS…LVYM, and WFIY…RLIY. Residues D112 and D130 contribute to the active site. The helical transmembrane segment at 121 to 141 threads the bilayer; it reads LHWPAFNVADSAISIGIVLFV.

This sequence belongs to the peptidase A8 family.

It is found in the cell inner membrane. It catalyses the reaction Release of signal peptides from bacterial membrane prolipoproteins. Hydrolyzes -Xaa-Yaa-Zaa-|-(S,diacylglyceryl)Cys-, in which Xaa is hydrophobic (preferably Leu), and Yaa (Ala or Ser) and Zaa (Gly or Ala) have small, neutral side chains.. It participates in protein modification; lipoprotein biosynthesis (signal peptide cleavage). Its function is as follows. This protein specifically catalyzes the removal of signal peptides from prolipoproteins. The sequence is that of Lipoprotein signal peptidase from Thermodesulfovibrio yellowstonii (strain ATCC 51303 / DSM 11347 / YP87).